The following is a 1007-amino-acid chain: Zinc finger CCCH domain-containing protein 4 (1007 aa).

The 165-residue stretch at 28-192 (VEKVKGNRVT…FRDLGRGERV (165 aa)) folds into the Helicase ATP-binding domain. Residue 41-48 (GDTGCGKS) coordinates ATP. The DEAH box signature appears at 139–142 (DEIH). One can recognise a Helicase C-terminal domain in the interval 250–420 (LIHRLLLHIH…EQVLMICCAE (171 aa)). 2 consecutive C3H1-type zinc fingers follow at residues 723-750 (ALEN…HSSR) and 751-778 (APRP…HDSG).

The chain is Zinc finger CCCH domain-containing protein 4 from Oryza sativa subsp. japonica (Rice).